A 438-amino-acid chain; its full sequence is Argininosuccinate lyase (438 aa).

Belongs to the lyase 1 family. Argininosuccinate lyase subfamily.

It localises to the cytoplasm. The enzyme catalyses 2-(N(omega)-L-arginino)succinate = fumarate + L-arginine. It functions in the pathway amino-acid biosynthesis; L-arginine biosynthesis; L-arginine from L-ornithine and carbamoyl phosphate: step 3/3. The chain is Argininosuccinate lyase from Clostridium kluyveri (strain NBRC 12016).